Consider the following 410-residue polypeptide: Argininosuccinate synthase (410 aa).

10–18 (AYSGGLDTS) provides a ligand contact to ATP. 2 residues coordinate L-citrulline: Y88 and S93. G118 serves as a coordination point for ATP. 3 residues coordinate L-aspartate: T120, N124, and D125. N124 provides a ligand contact to L-citrulline. L-citrulline contacts are provided by R128, S177, S186, E262, and Y274.

Belongs to the argininosuccinate synthase family. Type 1 subfamily. As to quaternary structure, homotetramer.

It is found in the cytoplasm. It carries out the reaction L-citrulline + L-aspartate + ATP = 2-(N(omega)-L-arginino)succinate + AMP + diphosphate + H(+). It functions in the pathway amino-acid biosynthesis; L-arginine biosynthesis; L-arginine from L-ornithine and carbamoyl phosphate: step 2/3. This Thermoanaerobacter sp. (strain X514) protein is Argininosuccinate synthase.